We begin with the raw amino-acid sequence, 306 residues long: Methionyl-tRNA formyltransferase (306 aa).

(6S)-5,6,7,8-tetrahydrofolate is bound at residue 109–112; sequence SILP.

This sequence belongs to the Fmt family.

The catalysed reaction is L-methionyl-tRNA(fMet) + (6R)-10-formyltetrahydrofolate = N-formyl-L-methionyl-tRNA(fMet) + (6S)-5,6,7,8-tetrahydrofolate + H(+). In terms of biological role, attaches a formyl group to the free amino group of methionyl-tRNA(fMet). The formyl group appears to play a dual role in the initiator identity of N-formylmethionyl-tRNA by promoting its recognition by IF2 and preventing the misappropriation of this tRNA by the elongation apparatus. This chain is Methionyl-tRNA formyltransferase, found in Herpetosiphon aurantiacus (strain ATCC 23779 / DSM 785 / 114-95).